Consider the following 490-residue polypeptide: Transcriptional regulator FleQ (490 aa).

Leu142 provides a ligand contact to 3',3'-c-di-GMP. Residues Val147 and 177–182 (GTGKEV) each bind ADP. 3',3'-c-di-GMP is bound by residues 186-189 (NLHY) and 330-341 (ELISRMEHEKRG). Residues Arg334 and Arg363 each coordinate ADP.

Forms homodimers. Forms homohexamers that inhibit transcription initiation. Interacts with FleN; this complex is formed in the presence as well as in the absence of c-di-GMP or ATP.

C-di-GMP interaction leads to active site obstruction, hexameric ring destabilization thus relieving DNA bending and activating gene transcription. Functionally, AAA+ ATPase enhancer-binding protein that acts as a transcription regulator and plays a role in the modulation of mucin adhesion and flagellar gene expression. In addition to flagella genes, also regulates expression of biofilm-related genes. Functions as a transcriptional repressor in the absence of c-di-GMP and as an activator when c-di-GMP is present. The sequence is that of Transcriptional regulator FleQ from Pseudomonas aeruginosa (strain ATCC 15692 / DSM 22644 / CIP 104116 / JCM 14847 / LMG 12228 / 1C / PRS 101 / PAO1).